Consider the following 341-residue polypeptide: Inositol 2-dehydrogenase (341 aa).

Belongs to the Gfo/Idh/MocA family. As to quaternary structure, homotetramer.

It catalyses the reaction myo-inositol + NAD(+) = scyllo-inosose + NADH + H(+). Its function is as follows. Involved in the oxidation of myo-inositol (MI) to 2-keto-myo-inositol (2KMI or 2-inosose). This is Inositol 2-dehydrogenase from Acidothermus cellulolyticus (strain ATCC 43068 / DSM 8971 / 11B).